A 296-amino-acid chain; its full sequence is Glycine N-acyltransferase (296 aa).

Residue lysine 16 is modified to N6-acetyllysine; alternate. Lysine 16 is modified (N6-succinyllysine; alternate). Lysine 113 is modified (N6-acetyllysine). Residues lysine 127, lysine 141, and lysine 142 each carry the N6-acetyllysine; alternate modification. Lysine 127, lysine 141, and lysine 142 each carry N6-succinyllysine; alternate. N6-acetyllysine is present on residues lysine 159 and lysine 167. The residue at position 169 (lysine 169) is an N6-succinyllysine. An N6-acetyllysine; alternate mark is found at lysine 183 and lysine 256. 2 positions are modified to N6-succinyllysine; alternate: lysine 183 and lysine 256. Residue lysine 267 is modified to N6-succinyllysine.

The protein belongs to the glycine N-acyltransferase family.

The protein resides in the mitochondrion. The enzyme catalyses an acyl-CoA + glycine = an N-acylglycine + CoA + H(+). The catalysed reaction is benzoyl-CoA + glycine = N-benzoylglycine + CoA + H(+). Functionally, mitochondrial acyltransferase which transfers an acyl group to the N-terminus of glycine and glutamine, although much less efficiently. Can conjugate a multitude of substrates to form a variety of N-acylglycines, thereby detoxify xenobiotics, such as benzoic acid or salicylic acid, and endogenous organic acids, such as isovaleric acid. In Mus musculus (Mouse), this protein is Glycine N-acyltransferase (Glyat).